Here is a 480-residue protein sequence, read N- to C-terminus: Glycogen synthase (480 aa).

Position 15 (Lys-15) interacts with ADP-alpha-D-glucose.

This sequence belongs to the glycosyltransferase 1 family. Bacterial/plant glycogen synthase subfamily.

The enzyme catalyses [(1-&gt;4)-alpha-D-glucosyl](n) + ADP-alpha-D-glucose = [(1-&gt;4)-alpha-D-glucosyl](n+1) + ADP + H(+). It participates in glycan biosynthesis; glycogen biosynthesis. Functionally, synthesizes alpha-1,4-glucan chains using ADP-glucose. This is Glycogen synthase from Rhizobium johnstonii (strain DSM 114642 / LMG 32736 / 3841) (Rhizobium leguminosarum bv. viciae).